A 143-amino-acid chain; its full sequence is Endoribonuclease YbeY (143 aa).

Zn(2+)-binding residues include H113, H117, and D123.

The protein belongs to the endoribonuclease YbeY family. The cofactor is Zn(2+).

It localises to the cytoplasm. Single strand-specific metallo-endoribonuclease involved in late-stage 70S ribosome quality control and in maturation of the 3' terminus of the 16S rRNA. The sequence is that of Endoribonuclease YbeY from Elusimicrobium minutum (strain Pei191).